We begin with the raw amino-acid sequence, 293 residues long: 4-hydroxy-tetrahydrodipicolinate synthase (293 aa).

Residue threonine 50 coordinates pyruvate. Residue tyrosine 138 is the Proton donor/acceptor of the active site. The Schiff-base intermediate with substrate role is filled by lysine 166. Valine 206 contributes to the pyruvate binding site.

The protein belongs to the DapA family. In terms of assembly, homotetramer; dimer of dimers.

It is found in the cytoplasm. The catalysed reaction is L-aspartate 4-semialdehyde + pyruvate = (2S,4S)-4-hydroxy-2,3,4,5-tetrahydrodipicolinate + H2O + H(+). The protein operates within amino-acid biosynthesis; L-lysine biosynthesis via DAP pathway; (S)-tetrahydrodipicolinate from L-aspartate: step 3/4. Functionally, catalyzes the condensation of (S)-aspartate-beta-semialdehyde [(S)-ASA] and pyruvate to 4-hydroxy-tetrahydrodipicolinate (HTPA). This Cutibacterium acnes (strain DSM 16379 / KPA171202) (Propionibacterium acnes) protein is 4-hydroxy-tetrahydrodipicolinate synthase.